A 202-amino-acid polypeptide reads, in one-letter code: MKQILLIDVSPRGKDSASRSVADTLAARLTSLYPSAKLIRRDLAAQPLPHLDEITLRALSTRDAAEAERLKETARQSDQLTDELLESDLLVIATPMWNFGIPSVLKAWIDLVVRPGRTFQYADGEVLGLAKDKKAILVLASGGVFTEGPWRPWDFIEPYLRQILNFIGIVDVQTVRIEGMNIPELVVDAVPKANKAVAELVL.

Residues serine 10, 16–18, and 96–99 each bind FMN; these read SAS and MWNF.

The protein belongs to the azoreductase type 1 family. Homodimer. It depends on FMN as a cofactor.

The catalysed reaction is 2 a quinone + NADH + H(+) = 2 a 1,4-benzosemiquinone + NAD(+). It catalyses the reaction N,N-dimethyl-1,4-phenylenediamine + anthranilate + 2 NAD(+) = 2-(4-dimethylaminophenyl)diazenylbenzoate + 2 NADH + 2 H(+). Functionally, quinone reductase that provides resistance to thiol-specific stress caused by electrophilic quinones. In terms of biological role, also exhibits azoreductase activity. Catalyzes the reductive cleavage of the azo bond in aromatic azo compounds to the corresponding amines. The chain is FMN-dependent NADH:quinone oxidoreductase from Beijerinckia indica subsp. indica (strain ATCC 9039 / DSM 1715 / NCIMB 8712).